We begin with the raw amino-acid sequence, 322 residues long: uncharacterized protein (322 aa).

Residues 26-267 (HFGHKVFKVA…CDQLEIIPPE (242 aa)) form the Radical SAM core domain. The [4Fe-4S] cluster site is built by C42, C54, and C57.

It belongs to the radical SAM superfamily. It depends on [4Fe-4S] cluster as a cofactor.

This is an uncharacterized protein from Bacillus subtilis (strain 168).